Reading from the N-terminus, the 407-residue chain is Imidazolonepropionase (407 aa).

The Fe(3+) site is built by histidine 73 and histidine 75. Zn(2+) is bound by residues histidine 73 and histidine 75. Residues arginine 82, tyrosine 145, and histidine 178 each coordinate 4-imidazolone-5-propanoate. Residue tyrosine 145 coordinates N-formimidoyl-L-glutamate. Residue histidine 243 coordinates Fe(3+). Zn(2+) is bound at residue histidine 243. Position 246 (glutamine 246) interacts with 4-imidazolone-5-propanoate. Fe(3+) is bound at residue aspartate 318. A Zn(2+)-binding site is contributed by aspartate 318. N-formimidoyl-L-glutamate is bound by residues asparagine 320 and glycine 322. Position 323 (threonine 323) interacts with 4-imidazolone-5-propanoate.

It belongs to the metallo-dependent hydrolases superfamily. HutI family. It depends on Zn(2+) as a cofactor. The cofactor is Fe(3+).

The protein resides in the cytoplasm. The catalysed reaction is 4-imidazolone-5-propanoate + H2O = N-formimidoyl-L-glutamate. Its pathway is amino-acid degradation; L-histidine degradation into L-glutamate; N-formimidoyl-L-glutamate from L-histidine: step 3/3. Catalyzes the hydrolytic cleavage of the carbon-nitrogen bond in imidazolone-5-propanoate to yield N-formimidoyl-L-glutamate. It is the third step in the universal histidine degradation pathway. The sequence is that of Imidazolonepropionase from Serratia proteamaculans (strain 568).